The following is a 221-amino-acid chain: MLKIDKVLSAPHGIAAVLVRRAPKLVLPFGERSKSRLRAVLDNGDEAALFLPRGTVLRGGDLLIAEDGSFVEVQAAAERVLEVRAADQHGLMRAAYHLGNRHTPVEVGRDYLRLEFDPVLADMLARLRVQAVQIDAPFEPEAGAYGGGHKHGHDATFAEDYAAAQAVFHEHHGHDHDHGHSHSHSHSHSHSHSHSHDHDHDHDHEHDVKGHVHGPGCGHKH.

The segment covering 171–180 (HHGHDHDHGH) has biased composition (basic and acidic residues). A disordered region spans residues 171–221 (HHGHDHDHGHSHSHSHSHSHSHSHSHDHDHDHDHEHDVKGHVHGPGCGHKH). The span at 181-193 (SHSHSHSHSHSHS) shows a compositional bias: basic residues. Over residues 194 to 210 (HSHDHDHDHDHEHDVKG) the composition is skewed to basic and acidic residues.

Belongs to the UreE family.

Its subcellular location is the cytoplasm. Involved in urease metallocenter assembly. Binds nickel. Probably functions as a nickel donor during metallocenter assembly. The polypeptide is Urease accessory protein UreE (Cupriavidus pinatubonensis (strain JMP 134 / LMG 1197) (Cupriavidus necator (strain JMP 134))).